Reading from the N-terminus, the 118-residue chain is UPF0342 protein BAMEG_3696 (118 aa).

This sequence belongs to the UPF0342 family.

The protein is UPF0342 protein BAMEG_3696 of Bacillus anthracis (strain CDC 684 / NRRL 3495).